The sequence spans 286 residues: Phosphonates import ATP-binding protein PhnC (286 aa).

The ABC transporter domain occupies 3–246 (FHLKQVTRRF…AVTEIYGTDS (244 aa)). 35 to 42 (GRSGAGKS) is an ATP binding site.

Belongs to the ABC transporter superfamily. Phosphonates importer (TC 3.A.1.9.1) family. In terms of assembly, the complex is composed of two ATP-binding proteins (PhnC), two transmembrane proteins (PhnE) and a solute-binding protein (PhnD).

The protein resides in the cell inner membrane. The catalysed reaction is phosphonate(out) + ATP + H2O = phosphonate(in) + ADP + phosphate + H(+). Part of the ABC transporter complex PhnCDE involved in phosphonates import. Responsible for energy coupling to the transport system. The chain is Phosphonates import ATP-binding protein PhnC from Agrobacterium fabrum (strain C58 / ATCC 33970) (Agrobacterium tumefaciens (strain C58)).